The primary structure comprises 108 residues: UPF0145 protein gll1048 (108 aa).

Belongs to the UPF0145 family.

In Gloeobacter violaceus (strain ATCC 29082 / PCC 7421), this protein is UPF0145 protein gll1048.